We begin with the raw amino-acid sequence, 298 residues long: Possible hemolysin C (298 aa).

2 CBS domains span residues 80-141 and 145-202; these read MVPR…QNGC and LIRK…IDDE.

It belongs to the UPF0053 family. Hemolysin C subfamily.

This chain is Possible hemolysin C (tlyC), found in Rickettsia canadensis (strain McKiel).